We begin with the raw amino-acid sequence, 201 residues long: Putative ferritin heavy polypeptide-like 19 (201 aa).

Positions 1–123 (MAFYFDQDDA…GYLSNLHKMG (123 aa)) constitute a Ferritin-like diiron domain.

It belongs to the ferritin family.

In Homo sapiens (Human), this protein is Putative ferritin heavy polypeptide-like 19 (FTH1P19).